The following is a 344-amino-acid chain: GTP 3',8-cyclase (344 aa).

A Radical SAM core domain is found at Pro-19 to Ala-245. A GTP-binding site is contributed by Arg-28. 2 residues coordinate [4Fe-4S] cluster: Cys-35 and Cys-39. Residue Tyr-41 participates in S-adenosyl-L-methionine binding. Cys-42 contributes to the [4Fe-4S] cluster binding site. Position 77 (Arg-77) interacts with GTP. Position 81 (Gly-81) interacts with S-adenosyl-L-methionine. Thr-111 is a GTP binding site. S-adenosyl-L-methionine is bound at residue Ser-135. GTP is bound at residue Lys-171. Position 205 (Met-205) interacts with S-adenosyl-L-methionine. [4Fe-4S] cluster-binding residues include Cys-268 and Cys-271. A GTP-binding site is contributed by Arg-273–Arg-275. Position 285 (Cys-285) interacts with [4Fe-4S] cluster.

This sequence belongs to the radical SAM superfamily. MoaA family. In terms of assembly, monomer and homodimer. [4Fe-4S] cluster serves as cofactor.

It catalyses the reaction GTP + AH2 + S-adenosyl-L-methionine = (8S)-3',8-cyclo-7,8-dihydroguanosine 5'-triphosphate + 5'-deoxyadenosine + L-methionine + A + H(+). It participates in cofactor biosynthesis; molybdopterin biosynthesis. Functionally, catalyzes the cyclization of GTP to (8S)-3',8-cyclo-7,8-dihydroguanosine 5'-triphosphate. The protein is GTP 3',8-cyclase of Brucella abortus (strain S19).